The following is a 527-amino-acid chain: Ribonuclease Y (527 aa).

Residues 21 to 41 traverse the membrane as a helical segment; sequence ILAIFFSFIIGIVFGGMALFV. The tract at residues 78-97 is disordered; it reads READKTRNSAETELKERRSE. One can recognise a KH domain in the interval 217-302; it reads TTNVVPLPSD…EVVTKAKEEV (86 aa). In terms of domain architecture, HD spans 343–436; sequence VLQHSIEVAQ…VSAADAISSA (94 aa).

Belongs to the RNase Y family.

The protein resides in the cell membrane. Its function is as follows. Endoribonuclease that initiates mRNA decay. This Dehalococcoides mccartyi (strain ATCC BAA-2100 / JCM 16839 / KCTC 5957 / BAV1) protein is Ribonuclease Y.